The primary structure comprises 444 residues: CCA-adding enzyme (444 aa).

ATP-binding residues include serine 57 and arginine 60. 2 residues coordinate CTP: serine 57 and arginine 60. Aspartate 69, aspartate 71, and aspartate 124 together coordinate Mg(2+). The ATP site is built by histidine 147, lysine 168, and tyrosine 177. CTP contacts are provided by histidine 147, lysine 168, and tyrosine 177.

It belongs to the tRNA nucleotidyltransferase/poly(A) polymerase family. Archaeal CCA-adding enzyme subfamily. Homodimer. Mg(2+) serves as cofactor.

It catalyses the reaction a tRNA precursor + 2 CTP + ATP = a tRNA with a 3' CCA end + 3 diphosphate. The enzyme catalyses a tRNA with a 3' CCA end + 2 CTP + ATP = a tRNA with a 3' CCACCA end + 3 diphosphate. Functionally, catalyzes the addition and repair of the essential 3'-terminal CCA sequence in tRNAs without using a nucleic acid template. Adds these three nucleotides in the order of C, C, and A to the tRNA nucleotide-73, using CTP and ATP as substrates and producing inorganic pyrophosphate. tRNA 3'-terminal CCA addition is required both for tRNA processing and repair. Also involved in tRNA surveillance by mediating tandem CCA addition to generate a CCACCA at the 3' terminus of unstable tRNAs. While stable tRNAs receive only 3'-terminal CCA, unstable tRNAs are marked with CCACCA and rapidly degraded. The chain is CCA-adding enzyme from Methanococcus maripaludis (strain C7 / ATCC BAA-1331).